We begin with the raw amino-acid sequence, 284 residues long: 2,3,4,5-tetrahydropyridine-2,6-dicarboxylate N-succinyltransferase (284 aa).

Residues Arg-111 and Asp-148 each contribute to the substrate site.

The protein belongs to the transferase hexapeptide repeat family. In terms of assembly, homotrimer.

It is found in the cytoplasm. It carries out the reaction (S)-2,3,4,5-tetrahydrodipicolinate + succinyl-CoA + H2O = (S)-2-succinylamino-6-oxoheptanedioate + CoA. The protein operates within amino-acid biosynthesis; L-lysine biosynthesis via DAP pathway; LL-2,6-diaminopimelate from (S)-tetrahydrodipicolinate (succinylase route): step 1/3. This is 2,3,4,5-tetrahydropyridine-2,6-dicarboxylate N-succinyltransferase from Mesorhizobium japonicum (strain LMG 29417 / CECT 9101 / MAFF 303099) (Mesorhizobium loti (strain MAFF 303099)).